The primary structure comprises 396 residues: Elongation factor Tu 1 (396 aa).

A tr-type G domain is found at 10–206 (KPHVNVGTIG…ALDSYIPLPE (197 aa)). The G1 stretch occupies residues 19–26 (GHVDHGKT). GTP is bound at residue 19 to 26 (GHVDHGKT). Thr-26 lines the Mg(2+) pocket. Positions 60–64 (GITIN) are G2. A G3 region spans residues 81-84 (DCPG). GTP-binding positions include 81–85 (DCPGH) and 136–139 (NKCD). The interval 136 to 139 (NKCD) is G4. The interval 174 to 176 (SAK) is G5.

This sequence belongs to the TRAFAC class translation factor GTPase superfamily. Classic translation factor GTPase family. EF-Tu/EF-1A subfamily. In terms of assembly, monomer.

The protein localises to the cytoplasm. It catalyses the reaction GTP + H2O = GDP + phosphate + H(+). Functionally, GTP hydrolase that promotes the GTP-dependent binding of aminoacyl-tRNA to the A-site of ribosomes during protein biosynthesis. The polypeptide is Elongation factor Tu 1 (Albidiferax ferrireducens (strain ATCC BAA-621 / DSM 15236 / T118) (Rhodoferax ferrireducens)).